The following is a 943-amino-acid chain: UvrABC system protein A (943 aa).

32–39 contributes to the ATP binding site; that stretch reads GLSGSGKS. The segment at 251–278 adopts a C4-type zinc-finger fold; that stretch reads CPVCGFTVPELEPRLFSFNAPFGSCSEC. 2 ABC transporter domains span residues 308–589 and 609–937; these read WNPI…SKSI and GNGR…HYLK. Residue 641–648 participates in ATP binding; it reads GVSGSGKS. The C4-type zinc-finger motif lies at 740–766; the sequence is CEACSGDGIIKIEMHFLPDVYVACEVC.

It belongs to the ABC transporter superfamily. UvrA family. Forms a heterotetramer with UvrB during the search for lesions.

The protein resides in the cytoplasm. Its function is as follows. The UvrABC repair system catalyzes the recognition and processing of DNA lesions. UvrA is an ATPase and a DNA-binding protein. A damage recognition complex composed of 2 UvrA and 2 UvrB subunits scans DNA for abnormalities. When the presence of a lesion has been verified by UvrB, the UvrA molecules dissociate. In Streptococcus pneumoniae serotype 4 (strain ATCC BAA-334 / TIGR4), this protein is UvrABC system protein A.